We begin with the raw amino-acid sequence, 88 residues long: Small ribosomal subunit protein uS17 (88 aa).

It belongs to the universal ribosomal protein uS17 family. As to quaternary structure, part of the 30S ribosomal subunit.

Functionally, one of the primary rRNA binding proteins, it binds specifically to the 5'-end of 16S ribosomal RNA. The protein is Small ribosomal subunit protein uS17 of Pseudomonas fluorescens (strain ATCC BAA-477 / NRRL B-23932 / Pf-5).